Reading from the N-terminus, the 334-residue chain is MASVLHKLITPLACSSPEPPRNKVTVVGVGQVGMACAVTILLRELADELALVDVVEDKVKGEMMDLQHGSLFLKTPKIVADKDYSVTSNSRIVVVTAGVRQQEGERRLNLDQRNVNIFKHIIPLIVRHSPDCIIIVVSNPVDVLTYVTWKLSGLPMHRVIGSGTNLDSARFRFLMADKLGIHSSSFNGWILGEHGDTSVPVWSGTNVAGVNLQTLNPNIGTDFDEENWKETHKMVVDSAYEVIKLKGYTNWAIGLSVADLTESLMRNMNRIHPVSTMAKGMYGIGDEVYLSLPCVLNSGGVGSVVNMTLTDEEVAQLQGSASTLWDIQKDLRDI.

Residues 30-58 (GQVGMACAVTILLRELADELALVDVVEDK) and arginine 100 contribute to the NAD(+) site. Substrate contacts are provided by arginine 107, asparagine 139, and arginine 170. NAD(+) is bound at residue asparagine 139. Residue histidine 194 is the Proton acceptor of the active site. Threonine 249 is a substrate binding site.

This sequence belongs to the LDH/MDH superfamily. LDH family. As to quaternary structure, homotetramer. As to expression, eye and liver.

It localises to the cytoplasm. The catalysed reaction is (S)-lactate + NAD(+) = pyruvate + NADH + H(+). The protein operates within fermentation; pyruvate fermentation to lactate; (S)-lactate from pyruvate: step 1/1. This Fundulus heteroclitus (Killifish) protein is L-lactate dehydrogenase C chain (ldhc).